A 538-amino-acid chain; its full sequence is Lipid scramblase CLPTM1L (538 aa).

Residues 1–10 (MWSGRSSFTS) lie on the Cytoplasmic side of the membrane. The chain crosses the membrane as a helical span at residues 11–31 (LVVGVFVVYVVHTCWVMYGIV). Residues 32 to 284 (YTRPCSGDAN…VKGIFVDTNL (253 aa)) lie on the Extracellular side of the membrane. Residues N91, N101, and N229 are each glycosylated (N-linked (GlcNAc...) asparagine). The helical transmembrane segment at 285–305 (YFLALTFFVAAFHLLFDFLAF) threads the bilayer. The Cytoplasmic portion of the chain corresponds to 306 to 324 (KNDISFWKKKKSMIGMSTK). A helical membrane pass occupies residues 325 to 342 (AVLWRCFSTVVIFLFLLD). Topologically, residues 343–346 (EQTS) are extracellular. The chain crosses the membrane as a helical span at residues 347 to 364 (LLVLVPAGVGAAIELWKV). The Cytoplasmic portion of the chain corresponds to 365–402 (KKALKMTIFWRGLMPEFQFGTYSESERKTEEYDTQAMK). Residues 403-423 (YLSYLLYPLCVGGAVYSLLNI) form a helical membrane-spanning segment. The Extracellular segment spans residues 424 to 428 (KYKSW). Residues 429–449 (YSWLINSFVNGVYAFGFLFML) traverse the membrane as a helical segment. Over 450 to 538 (PQLFVNYKLK…EKATRAPHTD (89 aa)) the chain is Cytoplasmic.

This sequence belongs to the CLPTM1 family. In terms of tissue distribution, ubiquitously expressed.

The protein resides in the endoplasmic reticulum membrane. The catalysed reaction is a 6-(alpha-D-glucosaminyl)-1-(1,2-diacyl-sn-glycero-3-phospho)-1D-myo-inositol(in) = a 6-(alpha-D-glucosaminyl)-1-(1,2-diacyl-sn-glycero-3-phospho)-1D-myo-inositol(out). It catalyses the reaction 6-(alpha-D-glucosaminyl)-(1-octadecanoyl,2-(9Z)-octadecenoyl-sn-glycero-3-phospho)-1D-myo-inositol(in) = 6-(alpha-D-glucosaminyl)-(1-octadecanoyl,2-(9Z)-octadecenoyl-sn-glycero-3-phospho)-1D-myo-inositol(out). It carries out the reaction a 1,2-diacyl-sn-glycero-3-phospho-(1D-myo-inositol)(in) = a 1,2-diacyl-sn-glycero-3-phospho-(1D-myo-inositol)(out). The enzyme catalyses a 1,2-diacyl-sn-glycero-3-phosphocholine(in) = a 1,2-diacyl-sn-glycero-3-phosphocholine(out). The catalysed reaction is a 1,2-diacyl-sn-glycero-3-phosphoethanolamine(in) = a 1,2-diacyl-sn-glycero-3-phosphoethanolamine(out). Scramblase that mediates the translocation of glucosaminylphosphatidylinositol (alpha-D-GlcN-(1-6)-(1,2-diacyl-sn-glycero-3-phospho)-1D-myo-inositol, GlcN-PI) across the endoplasmic reticulum (ER) membrane, from the cytosolic leaflet to the luminal leaflet of the ER membrane, where it participates in the biosynthesis of glycosylphosphatidylinositol (GPI). GPI is a lipid glycoconjugate involved in post-translational modification of proteins. Can also translocate 1,2-diacyl-sn-glycero-3-phospho-(1D-myo-inositol) (phosphatidylinositol or PI), as well as several other phospholipids (1,2-diacyl-sn-glycero-3-phosphocholine, 1,2-diacyl-sn-glycero-3-phosphoethanolamine), and N-acetylglucosaminylphosphatidylinositol (GlcNAc-PI) in vitro. The polypeptide is Lipid scramblase CLPTM1L (CLPTM1L) (Homo sapiens (Human)).